Here is a 906-residue protein sequence, read N- to C-terminus: MNPADADEEQRVSSVPAHRCRPGRIPSRSAETETEESSAEVAADTIGGDDSELEEGPLPGGDKEASAGNTNVSSGVACVAGFTSGGGVVSWRPESPSPDGTPSVLSLTRDSGPAVPSRGGRVSSGLSTFNPAGATRMELDSVEEEDDFGASLCKVSPPIQAMRMLMGKKCHCHGYWGKFRFCGVQEPARELPSDRNALWREMDTVSRHSAGLGSFRLFQLIMRHGPCLIRHSPRCDLLLGRFYFKANWARESRTPLCYASELCDESVRRFVLRHMEDLPKLAEETARFVELAGCWGLYAAILCLDKVCRQLHGQDESPGGVFLRIAVALTAAIENSRHSRIYRFHLDARFEGEVLESVLKRCRDGQLSLSTFTMSTVGFDRVPQYDFLISADPFSRDASWAAMCKWMSTLSCGVSVSVNVTRLNADVNSVIRCLGGYCDLIREKEVHRPVVRVFVDMWDVAAIRVINFILKESTSELTGVCYAFNVPSVLMKRYRAREQRYSLFGRPVSRRLSDLGQESAFEKEYSRCEQSCPKVVVNTDDFLKKMLLCALKGRASVVFVHHVVKYSIMADSVCLPPCLSPDMASCHFGECDMPVQRLTVNVARCVFARSDEQKLHLPDVVLGNTRRYFDLSVLRELVTEAVVWGNARLDALMSASEWWVESALEKLRPLHIGVAGLHTALMRLGFTYFASWDLIERIFEHMYFAAVRASVDLCKSGLPRCEWFERTIYQEGKFIFELYRLPRLSIASARWEALRADMLEFGLRNCQFLAVGPDDEVAHLWGVTPSVWASRGTVFEEETVWSLCPPNRECYFPTVVRRPLRVPVVNYAWLEQHQEEGKATQCLFQAAPAIQNDVEMAAVNLSVFVDQCVALVFYYDSGMTPDVLLARMLKWYHWRFKVGVYKYCAS.

2 disordered regions span residues 1-70 and 89-129; these read MNPA…AGNT and VSWR…LSTF. A compositionally biased stretch (polar residues) spans 98–109; that stretch reads PDGTPSVLSLTR.

The protein belongs to the ribonucleoside diphosphate reductase large chain family.

Its subcellular location is the virion. It is found in the host cytoplasm. Functionally, does not possess a ribonucleotide reductase activity. Betaherpesviruses probably use another strategy to expand the dNTP pool in a quiescent host cell. The protein is Ribonucleoside-diphosphate reductase large subunit-like protein of Homo sapiens (Human).